Consider the following 203-residue polypeptide: MSRYTGPRLKIIRRFGGLDLPGLTRKRPKNTNPPGMHGAERKKKSEYAIRLEEKQKVRLNYGVSERQMLRYMRKARRSKGSTGLALLQMLEMRLDCIVFRLGMAPTIPAARQLVSHGHIEVNGRKVTIPSYGCKVGDVITVRNKESSRKLVAAYAEYPGLFLPDYLEFDKEKLRGRIKELPPREQICAPVNELLVVEFYSRKL.

The tract at residues 20–45 (LPGLTRKRPKNTNPPGMHGAERKKKS) is disordered. An S4 RNA-binding domain is found at 92 to 155 (MRLDCIVFRL…SSRKLVAAYA (64 aa)).

Belongs to the universal ribosomal protein uS4 family. In terms of assembly, part of the 30S ribosomal subunit. Contacts protein S5. The interaction surface between S4 and S5 is involved in control of translational fidelity.

One of the primary rRNA binding proteins, it binds directly to 16S rRNA where it nucleates assembly of the body of the 30S subunit. Its function is as follows. With S5 and S12 plays an important role in translational accuracy. This chain is Small ribosomal subunit protein uS4, found in Synechococcus sp. (strain JA-3-3Ab) (Cyanobacteria bacterium Yellowstone A-Prime).